Here is a 341-residue protein sequence, read N- to C-terminus: KH domain-containing RNA-binding protein qki.S (341 aa).

Positions 88–154 (YVPVKEYPDF…WEHLNEDLHV (67 aa)) constitute a KH domain. The Nuclear localization signal signature appears at 324–330 (RVHPYQR).

This sequence belongs to the quaking family. In terms of assembly, homodimer; does not require RNA to homodimerize.

Its subcellular location is the nucleus. The protein localises to the cytoplasm. RNA reader protein, which recognizes and binds specific RNAs, thereby regulating RNA metabolic processes, such as pre-mRNA splicing, circular RNA (circRNA) formation, mRNA export, mRNA stability and/or translation. Involved in various cellular processes, such as mRNA storage into stress granules, apoptosis, interferon response, glial cell fate and development. Binds to the 5'-NACUAAY-N(1,20)-UAAY-3' RNA core sequence. Acts as a mRNA modification reader that specifically recognizes and binds mRNA transcripts modified by internal N(7)-methylguanine (m7G). Promotes the formation of circular RNAs (circRNAs): acts by binding to sites flanking circRNA-forming exons. CircRNAs are produced by back-splicing circularization of pre-mRNAs. Required to protect and promote stability of mRNAs which promotes oligodendrocyte differentiation. Acts as an important regulator of muscle development. Essential for notochord development. The chain is KH domain-containing RNA-binding protein qki.S from Xenopus laevis (African clawed frog).